The chain runs to 349 residues: CCN family member 2 (349 aa).

An N-terminal signal peptide occupies residues 1–26; the sequence is MSATGLSPVRCAFVLLLALCSRPASG. The region spanning 27–98 is the IGFBP N-terminal domain; that stretch reads QDCSGQCQCA…NRKIGVCTAK (72 aa). Intrachain disulfides connect Cys29/Cys54, Cys33/Cys56, Cys35/Cys57, Cys43/Cys60, Cys68/Cys82, and Cys74/Cys95. Positions 101 to 167 constitute a VWFC domain; it reads APCVFGGTVY…GKCCEEWVCD (67 aa). The region spanning 198–243 is the TSP type-1 domain; that stretch reads NCLVQTTEWSACSKTCGMGISTRVTNDNAFCRLEKQSRLCMVRPCE. The heparin-binding stretch occupies residues 247-349; sequence EENIKKGKKC…YYRKMYGDMA (103 aa). Cystine bridges form between Cys256-Cys293, Cys273-Cys307, Cys284-Cys323, Cys287-Cys325, and Cys292-Cys329. In terms of domain architecture, CTCK spans 256–330; sequence CIRTPKISKP…KTCACHYNCP (75 aa).

Belongs to the CCN family. As to quaternary structure, monomer. Interacts with TSKU.

The protein resides in the secreted. It localises to the extracellular space. The protein localises to the extracellular matrix. Major connective tissue mitoattractant secreted by vascular endothelial cells. Promotes proliferation and differentiation of chondrocytes. Is involved in the stimulation of osteoblast differentiation and has a critical role in osteogenesis. Mediates heparin- and divalent cation-dependent cell adhesion in many cell types including fibroblasts, myofibroblasts, endothelial and epithelial cells. Enhances fibroblast growth factor-induced DNA synthesis. This is CCN family member 2 (CCN2) from Sus scrofa (Pig).